The following is a 385-amino-acid chain: 1-deoxy-D-xylulose 5-phosphate reductoisomerase (385 aa).

NADPH-binding residues include threonine 10, glycine 11, serine 12, isoleucine 13, and asparagine 124. Lysine 125 is a 1-deoxy-D-xylulose 5-phosphate binding site. Glutamate 126 is an NADPH binding site. Aspartate 150 is a Mn(2+) binding site. 1-deoxy-D-xylulose 5-phosphate-binding residues include serine 151, glutamate 152, serine 176, and histidine 199. A Mn(2+)-binding site is contributed by glutamate 152. Residue glycine 205 coordinates NADPH. Residues serine 212, asparagine 217, lysine 218, and glutamate 221 each coordinate 1-deoxy-D-xylulose 5-phosphate. Glutamate 221 is a Mn(2+) binding site.

This sequence belongs to the DXR family. Requires Mg(2+) as cofactor. Mn(2+) is required as a cofactor.

The catalysed reaction is 2-C-methyl-D-erythritol 4-phosphate + NADP(+) = 1-deoxy-D-xylulose 5-phosphate + NADPH + H(+). It participates in isoprenoid biosynthesis; isopentenyl diphosphate biosynthesis via DXP pathway; isopentenyl diphosphate from 1-deoxy-D-xylulose 5-phosphate: step 1/6. Catalyzes the NADPH-dependent rearrangement and reduction of 1-deoxy-D-xylulose-5-phosphate (DXP) to 2-C-methyl-D-erythritol 4-phosphate (MEP). This chain is 1-deoxy-D-xylulose 5-phosphate reductoisomerase, found in Clostridium kluyveri (strain NBRC 12016).